Consider the following 432-residue polypeptide: Ornithine decarboxylase (432 aa).

Lys98 bears the N6-(pyridoxal phosphate)lysine mark. Residues Ser229, Gly266, and 296–299 (EPGR) contribute to the pyridoxal 5'-phosphate site. 341-342 (FD) serves as a coordination point for substrate. The Proton donor; shared with dimeric partner role is filled by Cys377. Substrate is bound at residue Asp378. A pyridoxal 5'-phosphate-binding site is contributed by Tyr407.

The protein belongs to the Orn/Lys/Arg decarboxylase class-II family. In terms of assembly, homodimer. Only the dimer is catalytically active, as the active sites are constructed of residues from both monomers. Pyridoxal 5'-phosphate is required as a cofactor.

It localises to the cytoplasm. The enzyme catalyses L-ornithine + H(+) = putrescine + CO2. It participates in amine and polyamine biosynthesis; putrescine biosynthesis via L-ornithine pathway; putrescine from L-ornithine: step 1/1. Its activity is regulated as follows. Inhibited by antizyme (AZ) OAZ1 in response to polyamine levels. AZ inhibits the assembly of the functional homodimer by binding to ODC monomers and targeting them for ubiquitin-independent proteolytic destruction by the 26S proteasome. Catalyzes the first and rate-limiting step of polyamine biosynthesis that converts ornithine into putrescine, which is the precursor for the polyamines, spermidine and spermine. Polyamines are essential for cell proliferation and are implicated in cellular processes, ranging from DNA replication to apoptosis. This Schizosaccharomyces pombe (strain 972 / ATCC 24843) (Fission yeast) protein is Ornithine decarboxylase (spe1).